The primary structure comprises 393 residues: Pyridinium-3,5-bisthiocarboxylic acid mononucleotide nickel insertion protein (393 aa).

Belongs to the LarC family.

The catalysed reaction is Ni(II)-pyridinium-3,5-bisthiocarboxylate mononucleotide = pyridinium-3,5-bisthiocarboxylate mononucleotide + Ni(2+). Involved in the biosynthesis of a nickel-pincer cofactor ((SCS)Ni(II) pincer complex). Binds Ni(2+), and functions in nickel delivery to pyridinium-3,5-bisthiocarboxylic acid mononucleotide (P2TMN), to form the mature cofactor. Is thus probably required for the activation of nickel-pincer cofactor-dependent enzymes. The sequence is that of Pyridinium-3,5-bisthiocarboxylic acid mononucleotide nickel insertion protein from Nocardioides sp. (strain ATCC BAA-499 / JS614).